Here is a 284-residue protein sequence, read N- to C-terminus: Bifunctional protein FolD (284 aa).

Residues Gly-165–Ser-167, Ser-190, and Ile-231 contribute to the NADP(+) site.

Belongs to the tetrahydrofolate dehydrogenase/cyclohydrolase family. As to quaternary structure, homodimer.

The enzyme catalyses (6R)-5,10-methylene-5,6,7,8-tetrahydrofolate + NADP(+) = (6R)-5,10-methenyltetrahydrofolate + NADPH. It carries out the reaction (6R)-5,10-methenyltetrahydrofolate + H2O = (6R)-10-formyltetrahydrofolate + H(+). It participates in one-carbon metabolism; tetrahydrofolate interconversion. Its function is as follows. Catalyzes the oxidation of 5,10-methylenetetrahydrofolate to 5,10-methenyltetrahydrofolate and then the hydrolysis of 5,10-methenyltetrahydrofolate to 10-formyltetrahydrofolate. The polypeptide is Bifunctional protein FolD (Streptococcus thermophilus (strain CNRZ 1066)).